The chain runs to 151 residues: Protein INO4 (151 aa).

The region spanning 45–97 (QIRINHVSSEKKRRELERAIFDELVAVVPDLQPQESRSELIIYLKSLSYLSWL) is the bHLH domain. The segment at 112–137 (HEAKTGSSSSSDPVQEQNGNIRDLVP) is disordered. Polar residues predominate over residues 116-131 (TGSSSSSDPVQEQNGN).

As to quaternary structure, efficient DNA binding requires dimerization with another bHLH protein.

It is found in the nucleus. Its function is as follows. Transcriptional activator of phospholipid synthetic genes (such as INO1, CHO1/PSS, CHO2/PEM1, OPI3/PEM2, etc.). The chain is Protein INO4 (INO4) from Saccharomyces cerevisiae (strain ATCC 204508 / S288c) (Baker's yeast).